A 272-amino-acid chain; its full sequence is Acetylglutamate kinase (272 aa).

Substrate is bound by residues 41–42, Arg-63, and Asn-166; that span reads GG.

The protein belongs to the acetylglutamate kinase family. ArgB subfamily.

The protein localises to the cytoplasm. The enzyme catalyses N-acetyl-L-glutamate + ATP = N-acetyl-L-glutamyl 5-phosphate + ADP. The protein operates within amino-acid biosynthesis; L-arginine biosynthesis; N(2)-acetyl-L-ornithine from L-glutamate: step 2/4. In terms of biological role, catalyzes the ATP-dependent phosphorylation of N-acetyl-L-glutamate. The chain is Acetylglutamate kinase from Anaeromyxobacter dehalogenans (strain 2CP-1 / ATCC BAA-258).